A 520-amino-acid polypeptide reads, in one-letter code: Maturase K (520 aa).

It belongs to the intron maturase 2 family. MatK subfamily.

It localises to the plastid. Its subcellular location is the chloroplast. In terms of biological role, usually encoded in the trnK tRNA gene intron. Probably assists in splicing its own and other chloroplast group II introns. In Iris cristata (Dwarf crested iris), this protein is Maturase K.